A 648-amino-acid chain; its full sequence is Zinc finger protein 202 (648 aa).

Lys-22 is covalently cross-linked (Glycyl lysine isopeptide (Lys-Gly) (interchain with G-Cter in SUMO2)). Positions 46–127 (HQNFRRFRYQ…VTLVEGLQKQ (82 aa)) constitute an SCAN box domain. The disordered stretch occupies residues 146-221 (SEETVHLGVE…PDLPAERSSG (76 aa)). Residues 165–182 (PVQSSTPEQSPEETTQSP) are compositionally biased toward polar residues. The 72-residue stretch at 237–308 (VTFKDVAVCF…DIQEPQETQE (72 aa)) folds into the KRAB domain. 2 consecutive C2H2-type zinc fingers follow at residues 397-419 (HDCS…LRTH) and 425-447 (YKCM…QKVH). Residues Lys-454 and Lys-460 each participate in a glycyl lysine isopeptide (Lys-Gly) (interchain with G-Cter in SUMO2) cross-link. Ser-466 is modified (phosphoserine). The segment at 481–503 (YRCDDCGKHFRWTSDLVRHQRTH) adopts a C2H2-type 3 zinc-finger fold. Residues Lys-507 and Lys-521 each participate in a glycyl lysine isopeptide (Lys-Gly) (interchain with G-Cter in SUMO2) cross-link. 5 C2H2-type zinc fingers span residues 509 to 531 (FFCT…QRIH), 537 to 559 (YLCG…RKTH), 565 to 587 (YLCS…LRGH), 593 to 615 (CRCN…QRTH), and 621 to 643 (FTCP…QRTH).

Interacts with SDP1. Highly expressed in testis. Also expressed in breast carcinoma cell lines.

It localises to the nucleus. Its function is as follows. Transcriptional repressor that binds to elements found predominantly in genes that participate in lipid metabolism. Among its targets are structural components of lipoprotein particles (apolipoproteins AIV, CIII, and E), enzymes involved in lipid processing (lipoprotein lipase, lecithin cholesteryl ester transferase), transporters involved in lipid homeostasis (ABCA1, ABCG1), and several genes involved in processes related to energy metabolism and vascular disease. The chain is Zinc finger protein 202 (ZNF202) from Homo sapiens (Human).